Consider the following 375-residue polypeptide: Probable Na(+)/H(+) antiporter GerT (375 aa).

10 helical membrane passes run 27-47, 89-109, 112-132, 145-165, 183-203, 204-224, 226-246, 261-281, 288-308, and 350-370; these read PSVLGKLIVGIIIGPAVLGII, AGGIIFPFIGGYVTGLLFGLI, HAIFLGLLLCATSVSITVQTL, TILGAAVFDDVIVVILLAFVM, IIFFVSIVFIAWKVVPWIMKM, LVPLRVTEALISAALIICFSF, YYSEMMGIAGIIGAFAAGIAI, PIAYAIFVPVFFVSIGMEITF, LWFIIIMTLIAIFTKLIGSGL, and ENFTAIVIVVILTTIITPPLL.

It belongs to the monovalent cation:proton antiporter 2 (CPA2) transporter (TC 2.A.37) family.

Its subcellular location is the membrane. In terms of biological role, contributes to the success of spore outgrowth from the germinated state during alkaline or Na(+) stress. Does not have a significant role in germination. The chain is Probable Na(+)/H(+) antiporter GerT (gerT) from Bacillus cereus.